A 195-amino-acid polypeptide reads, in one-letter code: Probable GTP-binding protein EngB (195 aa).

The 172-residue stretch at 24-195 (ELPEIALAGR…EAWDAILEKL (172 aa)) folds into the EngB-type G domain. GTP contacts are provided by residues 32-39 (GRSNVGKS), 59-63 (GKTQL), 77-80 (DVPG), 144-147 (TKAD), and 176-178 (FSS). Serine 39 and threonine 61 together coordinate Mg(2+).

It belongs to the TRAFAC class TrmE-Era-EngA-EngB-Septin-like GTPase superfamily. EngB GTPase family. Mg(2+) serves as cofactor.

In terms of biological role, necessary for normal cell division and for the maintenance of normal septation. The polypeptide is Probable GTP-binding protein EngB (Streptococcus pneumoniae serotype 4 (strain ATCC BAA-334 / TIGR4)).